A 358-amino-acid polypeptide reads, in one-letter code: Heme A synthase (358 aa).

The next 8 membrane-spanning stretches (helical) occupy residues 25-45 (LVRY…MVGG), 111-131 (LLAR…WLTG), 141-161 (MLGL…MVAS), 176-196 (IHLT…RGLV), 210-230 (FAGW…LVAG), 269-289 (VQFV…LHAV), 304-324 (TIVL…TLLM), and 326-346 (APLH…AFAV). His-273 serves as a coordination point for heme. Position 334 (His-334) interacts with heme.

The protein belongs to the COX15/CtaA family. Type 2 subfamily. As to quaternary structure, interacts with CtaB. The cofactor is heme b.

The protein localises to the cell membrane. The catalysed reaction is Fe(II)-heme o + 2 A + H2O = Fe(II)-heme a + 2 AH2. The protein operates within porphyrin-containing compound metabolism; heme A biosynthesis; heme A from heme O: step 1/1. Its function is as follows. Catalyzes the conversion of heme O to heme A by two successive hydroxylations of the methyl group at C8. The first hydroxylation forms heme I, the second hydroxylation results in an unstable dihydroxymethyl group, which spontaneously dehydrates, resulting in the formyl group of heme A. The chain is Heme A synthase from Brucella suis (strain ATCC 23445 / NCTC 10510).